A 346-amino-acid chain; its full sequence is Protein RecA (346 aa).

ATP is bound at residue 67 to 74; it reads GPESSGKT.

This sequence belongs to the RecA family.

It is found in the cytoplasm. In terms of biological role, can catalyze the hydrolysis of ATP in the presence of single-stranded DNA, the ATP-dependent uptake of single-stranded DNA by duplex DNA, and the ATP-dependent hybridization of homologous single-stranded DNAs. It interacts with LexA causing its activation and leading to its autocatalytic cleavage. The polypeptide is Protein RecA (Saccharopolyspora erythraea (strain ATCC 11635 / DSM 40517 / JCM 4748 / NBRC 13426 / NCIMB 8594 / NRRL 2338)).